The primary structure comprises 179 residues: Alkyl hydroperoxide reductase AhpD (179 aa).

Residue C130 is the Proton donor of the active site. C130 and C133 are disulfide-bonded. C133 serves as the catalytic Cysteine sulfenic acid (-SOH) intermediate.

Belongs to the AhpD family. As to quaternary structure, homotrimer.

The enzyme catalyses N(6)-[(R)-dihydrolipoyl]-L-lysyl-[lipoyl-carrier protein] + a hydroperoxide = N(6)-[(R)-lipoyl]-L-lysyl-[lipoyl-carrier protein] + an alcohol + H2O. Its function is as follows. Antioxidant protein with alkyl hydroperoxidase activity. Required for the reduction of the AhpC active site cysteine residues and for the regeneration of the AhpC enzyme activity. This chain is Alkyl hydroperoxide reductase AhpD, found in Rhodococcus erythropolis (strain PR4 / NBRC 100887).